Reading from the N-terminus, the 119-residue chain is Nucleoid-associated protein Cphy_0047 (119 aa).

The segment at alanine 23–threonine 45 is disordered. Residues lysine 28–tryptophan 42 show a composition bias toward basic and acidic residues.

The protein belongs to the YbaB/EbfC family. In terms of assembly, homodimer.

The protein localises to the cytoplasm. It is found in the nucleoid. Functionally, binds to DNA and alters its conformation. May be involved in regulation of gene expression, nucleoid organization and DNA protection. The polypeptide is Nucleoid-associated protein Cphy_0047 (Lachnoclostridium phytofermentans (strain ATCC 700394 / DSM 18823 / ISDg) (Clostridium phytofermentans)).